A 406-amino-acid chain; its full sequence is Lissencephaly-1 homolog (406 aa).

The LisH domain occupies 7 to 39; the sequence is QREELNKAIADYLRSNGYESALEAFQKEAEMPG. A coiled-coil region spans residues 54 to 81; that stretch reads TSVIRLQKKVMDLEAKLAEAEKEFQSGG. The segment covering 74–89 has biased composition (basic and acidic residues); that stretch reads EKEFQSGGPNKKERSP. Residues 74–99 are disordered; the sequence is EKEFQSGGPNKKERSPSEWIPRPPAR. WD repeat units follow at residues 104 to 145, 146 to 185, 188 to 227, 230 to 269, 272 to 329, 332 to 371, and 374 to 406; these read GHRS…RTLK, GHTD…NIKT, GHDH…CVKT, GHRE…CKAE, EHEH…CIMT, GHDN…CQKT, and AHQH…WECR.

Belongs to the WD repeat LIS1/nudF family.

The protein localises to the cytoplasm. Its subcellular location is the cytoskeleton. The protein resides in the microtubule organizing center. It is found in the centrosome. In terms of biological role, positively regulates the activity of the minus-end directed microtubule motor protein dynein. May enhance dynein-mediated microtubule sliding by targeting dynein to the microtubule plus end. Required for several dynein- and microtubule-dependent processes. This chain is Lissencephaly-1 homolog, found in Branchiostoma floridae (Florida lancelet).